The primary structure comprises 202 residues: Small ribosomal subunit protein uS4 (202 aa).

The S4 RNA-binding domain maps to 94–157; that stretch reads SRLDSLVYRA…LEIPLIKNTL (64 aa).

Belongs to the universal ribosomal protein uS4 family. As to quaternary structure, part of the 30S ribosomal subunit. Contacts protein S5. The interaction surface between S4 and S5 is involved in control of translational fidelity.

One of the primary rRNA binding proteins, it binds directly to 16S rRNA where it nucleates assembly of the body of the 30S subunit. In terms of biological role, with S5 and S12 plays an important role in translational accuracy. The sequence is that of Small ribosomal subunit protein uS4 from Ureaplasma parvum serovar 3 (strain ATCC 27815 / 27 / NCTC 11736).